Here is a 297-residue protein sequence, read N- to C-terminus: tRNA uridine(34) hydroxylase (297 aa).

The region spanning 133-228 is the Rhodanese domain; sequence SGDEVVFFDG…YGETFKDQGL (96 aa). The active-site Cysteine persulfide intermediate is the Cys188.

The protein belongs to the TrhO family.

The enzyme catalyses uridine(34) in tRNA + AH2 + O2 = 5-hydroxyuridine(34) in tRNA + A + H2O. Its function is as follows. Catalyzes oxygen-dependent 5-hydroxyuridine (ho5U) modification at position 34 in tRNAs. This Pseudarthrobacter chlorophenolicus (strain ATCC 700700 / DSM 12829 / CIP 107037 / JCM 12360 / KCTC 9906 / NCIMB 13794 / A6) (Arthrobacter chlorophenolicus) protein is tRNA uridine(34) hydroxylase.